The sequence spans 226 residues: UPF0758 protein SPT_1135 (226 aa).

One can recognise an MPN domain in the interval serine 103–leucine 225. Zn(2+) is bound by residues histidine 174, histidine 176, and aspartate 187. The JAMM motif signature appears at histidine 174–aspartate 187.

The protein belongs to the UPF0758 family.

The polypeptide is UPF0758 protein SPT_1135 (Streptococcus pneumoniae (strain Taiwan19F-14)).